We begin with the raw amino-acid sequence, 486 residues long: Sensor protein PhoQ (486 aa).

Residues 1–16 (MKKLLHLFFPLSLRVR) are Cytoplasmic-facing. A helical transmembrane segment spans residues 17 to 37 (FLLATAAVVLVLSLAYGMVAL). At 38–194 (IGYSVSFDKT…LKSSYMVWSW (157 aa)) the chain is on the periplasmic side. Positions 151 and 152 each coordinate a divalent metal cation. Residues 195-215 (FIYVLSANLLLVIPLLWVAAW) traverse the membrane as a helical segment. Residues 215–266 (WWSLRPIEALAKEVRELEEHNRELLNPATTRELTSLVRNLNRLLKSERERYD) enclose the HAMP domain. The Cytoplasmic segment spans residues 216–486 (WSLRPIEALA…GRQHSAPKDE (271 aa)). The Histidine kinase domain maps to 274–480 (DLTHSLKTPL…RMEVIFGRQH (207 aa)). At H277 the chain carries Phosphohistidine; by autocatalysis. N385 is a Mg(2+) binding site. Residues 385 to 393 (NVLDNACKY), 415 to 420 (DDGPGI), and 434 to 446 (RVDT…GVGL) each bind ATP. Position 442 (Q442) interacts with Mg(2+).

Homodimer.

It localises to the cell inner membrane. It carries out the reaction ATP + protein L-histidine = ADP + protein N-phospho-L-histidine.. Member of the two-component regulatory system PhoP/PhoQ involved in virulence, adaptation to low Mg(2+) environments and the control of acid resistance genes. In low periplasmic Mg(2+), PhoQ functions as a membrane-associated protein kinase that undergoes autophosphorylation and subsequently transfers the phosphate to PhoP, resulting in the expression of PhoP-activated genes (PAG) and repression of PhoP-repressed genes (PRG). In high periplasmic Mg(2+), acts as a protein phosphatase that dephosphorylates phospho-PhoP, which results in the repression of PG and may lead to expression of some PRG. The sequence is that of Sensor protein PhoQ (phoQ) from Escherichia coli O6:H1 (strain CFT073 / ATCC 700928 / UPEC).